The primary structure comprises 400 residues: MGVLMSKRQTVEQVQKVSLAVSAFKDGLRDRPSIRRGGELPGSRRGTVEGSVQEVQEEKEAEASAPVVQEESSINRAAWERLRDGRGVEPEEFDRTSRFTPPAFIRPTRKLDDDKPPDICLEPREPVVNDEMCDVCEVWTAESLFPCRVCTRVFHDGCLRRMGYLQGDSAVEVTEMAHTETGWSCYYCDNLNLLLTEEEMYSLTETFQRCKVIPDCSLTLEDFVRYRHQAAKRGESSRALTDEQEEQAARQFAALDPEQRGHVEWSDFLSHESLLLLLQLRPQNSLLRLLTVKERERARATFLARGRGSTISEAECHHARHSWFCKRLTEAPSCSVSISHVGPIADSSPAASSSKSQEKALLPTEQESRYVDWPTFLRENVIYILAARPNSGAIHLKPPG.

The N-myristoyl glycine moiety is linked to residue G2. The span at 29–38 (RDRPSIRRGG) shows a compositional bias: basic and acidic residues. Residues 29–65 (RDRPSIRRGGELPGSRRGTVEGSVQEVQEEKEAEASA) are disordered. Residue R36 is modified to Omega-N-methylarginine. S43 is modified (phosphoserine). Position 47 is a phosphothreonine (T47). S51 is modified (phosphoserine). Residues 129 to 190 (NDEMCDVCEV…TGWSCYYCDN (62 aa)) form a PHD-type zinc finger. Residue R307 is modified to Omega-N-methylarginine.

This is PHD finger protein 24 from Mus musculus (Mouse).